A 56-amino-acid chain; its full sequence is Large ribosomal subunit protein bL32 (56 aa).

It belongs to the bacterial ribosomal protein bL32 family.

This chain is Large ribosomal subunit protein bL32, found in Edwardsiella ictaluri (strain 93-146).